Reading from the N-terminus, the 522-residue chain is Gypsy retrotransposon integrase-like protein 1 (522 aa).

The 158-residue stretch at 135–292 (KVENPWSLVT…TPYFQMFSRN (158 aa)) folds into the Integrase catalytic domain.

This Macaca fascicularis (Crab-eating macaque) protein is Gypsy retrotransposon integrase-like protein 1 (GIN1).